A 426-amino-acid polypeptide reads, in one-letter code: MSKSEQLFEKAQKVIPGGVNSPVRAFKGVGGTPVFIQKAEGAYITDSDGKKYIDYVGSWGPMVLGHNHPAIIDAVLKAVPNGLSFGAPTESEITLAELVTKLVPSIELVRMVSSGTEATMSAIRLARGYTGRDKIIKFEGCYHGHSDSLLVKAGSGALTLGQPSGPGVPADFAKHTLTCTYNDLDSVKTAFEQYPNEIACLIVEPVAGNMNCIPPKNDFLKGLRALCDQYGAVFIIDEVMTGFRVALGGAQAYYDVKPDLTTLGKIIGGGMPVGAFGGKKEIMEYIAPTGPVYQAGTLSGNPIAMAAGLACLTELSKAGNEEKLAAQTKTLAEGFKALADKHNVPFTAQYVGGMFGLFFTEQAEITNFQEVMKCDAAKFNRFFHLMLEQGVYLAPSAFEAGFMSLAHSDEDIQATLVAADKAFAQL.

Position 265 is an N6-(pyridoxal phosphate)lysine (lysine 265).

This sequence belongs to the class-III pyridoxal-phosphate-dependent aminotransferase family. HemL subfamily. Homodimer. Requires pyridoxal 5'-phosphate as cofactor.

It is found in the cytoplasm. It catalyses the reaction (S)-4-amino-5-oxopentanoate = 5-aminolevulinate. It participates in porphyrin-containing compound metabolism; protoporphyrin-IX biosynthesis; 5-aminolevulinate from L-glutamyl-tRNA(Glu): step 2/2. In Actinobacillus pleuropneumoniae serotype 7 (strain AP76), this protein is Glutamate-1-semialdehyde 2,1-aminomutase.